The chain runs to 181 residues: Acireductone dioxygenase (181 aa).

Positions 97, 99, 103, and 141 each coordinate Fe(2+). Positions 97, 99, 103, and 141 each coordinate Ni(2+).

Belongs to the acireductone dioxygenase (ARD) family. Monomer. Fe(2+) serves as cofactor. Ni(2+) is required as a cofactor.

It catalyses the reaction 1,2-dihydroxy-5-(methylsulfanyl)pent-1-en-3-one + O2 = 3-(methylsulfanyl)propanoate + CO + formate + 2 H(+). The enzyme catalyses 1,2-dihydroxy-5-(methylsulfanyl)pent-1-en-3-one + O2 = 4-methylsulfanyl-2-oxobutanoate + formate + 2 H(+). Its pathway is amino-acid biosynthesis; L-methionine biosynthesis via salvage pathway; L-methionine from S-methyl-5-thio-alpha-D-ribose 1-phosphate: step 5/6. Functionally, catalyzes 2 different reactions between oxygen and the acireductone 1,2-dihydroxy-3-keto-5-methylthiopentene (DHK-MTPene) depending upon the metal bound in the active site. Fe-containing acireductone dioxygenase (Fe-ARD) produces formate and 2-keto-4-methylthiobutyrate (KMTB), the alpha-ketoacid precursor of methionine in the methionine recycle pathway. Ni-containing acireductone dioxygenase (Ni-ARD) produces methylthiopropionate, carbon monoxide and formate, and does not lie on the methionine recycle pathway. The polypeptide is Acireductone dioxygenase (Pseudomonas fluorescens (strain Pf0-1)).